The sequence spans 129 residues: Small ribosomal subunit protein uS11 (129 aa).

The protein belongs to the universal ribosomal protein uS11 family. In terms of assembly, part of the 30S ribosomal subunit. Interacts with proteins S7 and S18. Binds to IF-3.

Located on the platform of the 30S subunit, it bridges several disparate RNA helices of the 16S rRNA. Forms part of the Shine-Dalgarno cleft in the 70S ribosome. This Geobacillus stearothermophilus (Bacillus stearothermophilus) protein is Small ribosomal subunit protein uS11.